A 459-amino-acid polypeptide reads, in one-letter code: Putrescine aminotransferase (459 aa).

Residues 150–151 and Gln274 each bind pyridoxal 5'-phosphate; that span reads GT. Lys300 bears the N6-(pyridoxal phosphate)lysine mark. Thr332 provides a ligand contact to pyridoxal 5'-phosphate.

It belongs to the class-III pyridoxal-phosphate-dependent aminotransferase family. Putrescine aminotransferase subfamily. Pyridoxal 5'-phosphate serves as cofactor.

It catalyses the reaction an alkane-alpha,omega-diamine + 2-oxoglutarate = an omega-aminoaldehyde + L-glutamate. It carries out the reaction putrescine + 2-oxoglutarate = 1-pyrroline + L-glutamate + H2O. The catalysed reaction is cadaverine + 2-oxoglutarate = 5-aminopentanal + L-glutamate. It functions in the pathway amine and polyamine degradation; putrescine degradation; 4-aminobutanal from putrescine (transaminase route): step 1/1. Catalyzes the aminotransferase reaction from putrescine to 2-oxoglutarate, leading to glutamate and 4-aminobutanal, which spontaneously cyclizes to form 1-pyrroline. This is the first step in one of two pathways for putrescine degradation, where putrescine is converted into 4-aminobutanoate (gamma-aminobutyrate or GABA) via 4-aminobutanal. Also functions as a cadaverine transaminase in a a L-lysine degradation pathway to succinate that proceeds via cadaverine, glutarate and L-2-hydroxyglutarate. The polypeptide is Putrescine aminotransferase (Enterobacter sp. (strain 638)).